The chain runs to 223 residues: Ribonuclease T (223 aa).

The region spanning 20-194 is the Exonuclease domain; that stretch reads VVIDVETAGF…YDTERTAELF (175 aa). 4 residues coordinate Mg(2+): Asp-23, Glu-25, His-181, and Asp-186. The Proton donor/acceptor role is filled by His-181.

It belongs to the RNase T family. Homodimer. The cofactor is Mg(2+).

Functionally, trims short 3' overhangs of a variety of RNA species, leaving a one or two nucleotide 3' overhang. Responsible for the end-turnover of tRNA: specifically removes the terminal AMP residue from uncharged tRNA (tRNA-C-C-A). Also appears to be involved in tRNA biosynthesis. The chain is Ribonuclease T from Shewanella baltica (strain OS155 / ATCC BAA-1091).